We begin with the raw amino-acid sequence, 105 residues long: Large ribosomal subunit protein uL24 (105 aa).

This sequence belongs to the universal ribosomal protein uL24 family. In terms of assembly, part of the 50S ribosomal subunit.

Its function is as follows. One of two assembly initiator proteins, it binds directly to the 5'-end of the 23S rRNA, where it nucleates assembly of the 50S subunit. Functionally, one of the proteins that surrounds the polypeptide exit tunnel on the outside of the subunit. This chain is Large ribosomal subunit protein uL24, found in Clostridium botulinum (strain 657 / Type Ba4).